The sequence spans 256 residues: tRNA pseudouridine synthase A (256 aa).

Asp55 acts as the Nucleophile in catalysis. Tyr113 is a binding site for substrate.

It belongs to the tRNA pseudouridine synthase TruA family. In terms of assembly, homodimer.

The enzyme catalyses uridine(38/39/40) in tRNA = pseudouridine(38/39/40) in tRNA. Its function is as follows. Formation of pseudouridine at positions 38, 39 and 40 in the anticodon stem and loop of transfer RNAs. The sequence is that of tRNA pseudouridine synthase A from Limosilactobacillus reuteri (strain DSM 20016) (Lactobacillus reuteri).